A 332-amino-acid polypeptide reads, in one-letter code: Ribosomal RNA small subunit methyltransferase H (332 aa).

Residues glycine 36–tyrosine 38, aspartate 54, phenylalanine 81, aspartate 102, and glutamine 109 contribute to the S-adenosyl-L-methionine site. Positions valine 284–glycine 332 are disordered.

Belongs to the methyltransferase superfamily. RsmH family.

The protein resides in the cytoplasm. It carries out the reaction cytidine(1402) in 16S rRNA + S-adenosyl-L-methionine = N(4)-methylcytidine(1402) in 16S rRNA + S-adenosyl-L-homocysteine + H(+). In terms of biological role, specifically methylates the N4 position of cytidine in position 1402 (C1402) of 16S rRNA. This is Ribosomal RNA small subunit methyltransferase H from Nitrobacter hamburgensis (strain DSM 10229 / NCIMB 13809 / X14).